Reading from the N-terminus, the 69-residue chain is uncharacterized protein (69 aa).

Residues 1-19 (MKRIWVSLMIAITACSAHA) form the signal peptide.

This is an uncharacterized protein from Pasteurella multocida (strain Pm70).